Reading from the N-terminus, the 599-residue chain is Sulfite reductase [NADPH] flavoprotein alpha-component (599 aa).

Residues 64 to 202 form the Flavodoxin-like domain; sequence ITIISASQTG…AASEWRARVV (139 aa). Residues 70-75, 117-120, and 153-162 contribute to the FMN site; these read SQTGNA, STQG, and LGDSSYEFFC. The FAD-binding FR-type domain maps to 234 to 448; the sequence is DAPLVASLSV…IEHNDNFRLP (215 aa). Residues Thr322, Ala356, 386–389, 404–406, Tyr410, and 419–422 contribute to the FAD site; these read RLYS, TVG, and GGAS. NADP(+) contacts are provided by residues 519–520, 525–529, and Asp561; these read SR and KVYVQ. Tyr599 contributes to the FAD binding site.

The protein belongs to the NADPH-dependent sulphite reductase flavoprotein subunit CysJ family. It in the N-terminal section; belongs to the flavodoxin family. This sequence in the C-terminal section; belongs to the flavoprotein pyridine nucleotide cytochrome reductase family. In terms of assembly, alpha(8)-beta(8). The alpha component is a flavoprotein, the beta component is a hemoprotein. FAD is required as a cofactor. It depends on FMN as a cofactor.

It catalyses the reaction hydrogen sulfide + 3 NADP(+) + 3 H2O = sulfite + 3 NADPH + 4 H(+). It functions in the pathway sulfur metabolism; hydrogen sulfide biosynthesis; hydrogen sulfide from sulfite (NADPH route): step 1/1. In terms of biological role, component of the sulfite reductase complex that catalyzes the 6-electron reduction of sulfite to sulfide. This is one of several activities required for the biosynthesis of L-cysteine from sulfate. The flavoprotein component catalyzes the electron flow from NADPH -&gt; FAD -&gt; FMN to the hemoprotein component. This Escherichia coli (strain ATCC 8739 / DSM 1576 / NBRC 3972 / NCIMB 8545 / WDCM 00012 / Crooks) protein is Sulfite reductase [NADPH] flavoprotein alpha-component.